The following is a 307-amino-acid chain: Glycine--tRNA ligase alpha subunit (307 aa).

Belongs to the class-II aminoacyl-tRNA synthetase family. Tetramer of two alpha and two beta subunits.

The protein resides in the cytoplasm. The catalysed reaction is tRNA(Gly) + glycine + ATP = glycyl-tRNA(Gly) + AMP + diphosphate. This is Glycine--tRNA ligase alpha subunit from Aeromonas salmonicida (strain A449).